The chain runs to 257 residues: 3-deoxy-manno-octulosonate cytidylyltransferase (257 aa).

The protein belongs to the KdsB family.

The protein resides in the cytoplasm. The catalysed reaction is 3-deoxy-alpha-D-manno-oct-2-ulosonate + CTP = CMP-3-deoxy-beta-D-manno-octulosonate + diphosphate. Its pathway is nucleotide-sugar biosynthesis; CMP-3-deoxy-D-manno-octulosonate biosynthesis; CMP-3-deoxy-D-manno-octulosonate from 3-deoxy-D-manno-octulosonate and CTP: step 1/1. It participates in bacterial outer membrane biogenesis; lipopolysaccharide biosynthesis. Activates KDO (a required 8-carbon sugar) for incorporation into bacterial lipopolysaccharide in Gram-negative bacteria. The sequence is that of 3-deoxy-manno-octulosonate cytidylyltransferase from Rhodospirillum centenum (strain ATCC 51521 / SW).